Reading from the N-terminus, the 350-residue chain is Fe(3+) ions import ATP-binding protein FbpC (350 aa).

An ABC transporter domain is found at 4-236 (LDIINLSKSF…PNDEQTAHFL (233 aa)). 36–43 (GPSGSGKT) is an ATP binding site.

Belongs to the ABC transporter superfamily. Fe(3+) ion importer (TC 3.A.1.10) family. As to quaternary structure, the complex is composed of two ATP-binding proteins (FbpC), two transmembrane proteins (FbpB) and a solute-binding protein (FbpA).

It is found in the cell inner membrane. It carries out the reaction Fe(3+)(out) + ATP + H2O = Fe(3+)(in) + ADP + phosphate + H(+). Functionally, part of the ABC transporter complex FbpABC involved in Fe(3+) ions import. Responsible for energy coupling to the transport system. This Pseudomonas fluorescens (strain Pf0-1) protein is Fe(3+) ions import ATP-binding protein FbpC.